Reading from the N-terminus, the 337-residue chain is Glyceraldehyde-3-phosphate dehydrogenase (337 aa).

NAD(+) is bound by residues 12 to 13 (RI), Asp-34, and Arg-79. Residues 150-152 (SCT), Thr-181, 210-211 (TG), and Arg-233 contribute to the D-glyceraldehyde 3-phosphate site. Cys-151 functions as the Nucleophile in the catalytic mechanism. Asn-315 contacts NAD(+).

Belongs to the glyceraldehyde-3-phosphate dehydrogenase family. In terms of assembly, homotetramer.

The protein resides in the cytoplasm. It carries out the reaction D-glyceraldehyde 3-phosphate + phosphate + NAD(+) = (2R)-3-phospho-glyceroyl phosphate + NADH + H(+). Its pathway is carbohydrate degradation; glycolysis; pyruvate from D-glyceraldehyde 3-phosphate: step 1/5. The chain is Glyceraldehyde-3-phosphate dehydrogenase (GPD) from Omphalotus olearius (Jack o'lantern).